The primary structure comprises 226 residues: Urease accessory protein UreF (226 aa).

It belongs to the UreF family. As to quaternary structure, ureD, UreF and UreG form a complex that acts as a GTP-hydrolysis-dependent molecular chaperone, activating the urease apoprotein by helping to assemble the nickel containing metallocenter of UreC. The UreE protein probably delivers the nickel.

It is found in the cytoplasm. Required for maturation of urease via the functional incorporation of the urease nickel metallocenter. This is Urease accessory protein UreF from Burkholderia lata (strain ATCC 17760 / DSM 23089 / LMG 22485 / NCIMB 9086 / R18194 / 383).